We begin with the raw amino-acid sequence, 296 residues long: MNFQDIISSLNSFWSNQGCVLLQPYDTEKGAGTMSPHTILRAIGPEPWSVAYVEPCRRPTDGRYGENPNRAQHYYQYQVIIKPSPDEIQEKYLSSLEALGIKQEQHDIRFVEDNWESPTLGAWGVGWEVWLDGMEVTQFTYFQQCGGLDCRPVSIEITYGLERIAMYLQDVKSIWDLRWNDSYSYGDIWLPYEKSNCKFNFEGSNPERLFKLFDLYEEEAKSLLNKRLSSPALDFVLKCSHTFNLLEARGVISVTERTATIARIRNLARKVAELWLEERKNIGFPLLKNSQTSKNS.

It belongs to the class-II aminoacyl-tRNA synthetase family. As to quaternary structure, tetramer of two alpha and two beta subunits.

The protein resides in the cytoplasm. It catalyses the reaction tRNA(Gly) + glycine + ATP = glycyl-tRNA(Gly) + AMP + diphosphate. In Prochlorococcus marinus (strain SARG / CCMP1375 / SS120), this protein is Glycine--tRNA ligase alpha subunit.